The primary structure comprises 133 residues: Large ribosomal subunit protein uL14m (133 aa).

This sequence belongs to the universal ribosomal protein uL14 family. In terms of assembly, probably part of the large ribosomal subunit.

The protein resides in the hydrogenosome. The chain is Large ribosomal subunit protein uL14m (rpl14) from Nyctotherus ovalis.